Here is a 466-residue protein sequence, read N- to C-terminus: tRNA modification GTPase MnmE (466 aa).

(6S)-5-formyl-5,6,7,8-tetrahydrofolate-binding residues include Arg24, Glu85, and Lys128. Positions 224 to 384 (GLNIVLAGQP…LRTELLHLVG (161 aa)) constitute a TrmE-type G domain. A K(+)-binding site is contributed by Asn234. GTP is bound by residues 234–239 (NVGKSS), 253–259 (TPIAGTT), and 278–281 (DTAG). Position 238 (Ser238) interacts with Mg(2+). Thr253, Ile255, and Thr258 together coordinate K(+). Residue Thr259 coordinates Mg(2+). Position 466 (Lys466) interacts with (6S)-5-formyl-5,6,7,8-tetrahydrofolate.

The protein belongs to the TRAFAC class TrmE-Era-EngA-EngB-Septin-like GTPase superfamily. TrmE GTPase family. As to quaternary structure, homodimer. Heterotetramer of two MnmE and two MnmG subunits. It depends on K(+) as a cofactor.

It localises to the cytoplasm. In terms of biological role, exhibits a very high intrinsic GTPase hydrolysis rate. Involved in the addition of a carboxymethylaminomethyl (cmnm) group at the wobble position (U34) of certain tRNAs, forming tRNA-cmnm(5)s(2)U34. The chain is tRNA modification GTPase MnmE from Herminiimonas arsenicoxydans.